Here is a 145-residue protein sequence, read N- to C-terminus: Probable WRKY transcription factor 75 (145 aa).

The span at 20 to 38 (SKPELHQGEEESSKVRSEG) shows a compositional bias: basic and acidic residues. The segment at 20–55 (SKPELHQGEEESSKVRSEGCSKSVESSKKKGKKQRY) is disordered. The segment at residues 61–126 (SQVDILDDGY…YEGVHSHPIE (66 aa)) is a DNA-binding region (WRKY).

The protein belongs to the WRKY group II-c family.

It is found in the nucleus. Functionally, transcription factor. Interacts specifically with the W box (5'-(T)TGAC[CT]-3'), a frequently occurring elicitor-responsive cis-acting element. The polypeptide is Probable WRKY transcription factor 75 (WRKY75) (Arabidopsis thaliana (Mouse-ear cress)).